We begin with the raw amino-acid sequence, 147 residues long: 3-dehydroquinate dehydratase 1 (147 aa).

Catalysis depends on Tyr-23, which acts as the Proton acceptor. Asn-75, His-81, and Asp-88 together coordinate substrate. His-101 acts as the Proton donor in catalysis. Substrate is bound by residues 102-103 and Arg-112; that span reads LS.

Belongs to the type-II 3-dehydroquinase family. Homododecamer.

The enzyme catalyses 3-dehydroquinate = 3-dehydroshikimate + H2O. The protein operates within metabolic intermediate biosynthesis; chorismate biosynthesis; chorismate from D-erythrose 4-phosphate and phosphoenolpyruvate: step 3/7. Its function is as follows. Catalyzes a trans-dehydration via an enolate intermediate. The sequence is that of 3-dehydroquinate dehydratase 1 (aroQ1) from Pseudomonas aeruginosa (strain ATCC 15692 / DSM 22644 / CIP 104116 / JCM 14847 / LMG 12228 / 1C / PRS 101 / PAO1).